The chain runs to 286 residues: DegV domain-containing protein M6_Spy1658 (286 aa).

The DegV domain occupies 3 to 282 (FTIMTDSTAD…PNTLAVFVIG (280 aa)). Residues Thr62 and Ser94 each contribute to the hexadecanoate site.

Its function is as follows. May bind long-chain fatty acids, such as palmitate, and may play a role in lipid transport or fatty acid metabolism. This chain is DegV domain-containing protein M6_Spy1658, found in Streptococcus pyogenes serotype M6 (strain ATCC BAA-946 / MGAS10394).